The following is a 165-amino-acid chain: UPF0178 protein Bphyt_5655 (165 aa).

2 disordered regions span residues 115–134 and 139–165; these read LRGS…RDSK and ELDR…PPTE.

Belongs to the UPF0178 family.

In Paraburkholderia phytofirmans (strain DSM 17436 / LMG 22146 / PsJN) (Burkholderia phytofirmans), this protein is UPF0178 protein Bphyt_5655.